Reading from the N-terminus, the 172-residue chain is C-phycocyanin beta chain (172 aa).

Position 72 is an N4-methylasparagine (Asn72). The (2R,3E)-phycocyanobilin site is built by Cys82 and Cys153.

It belongs to the phycobiliprotein family. As to quaternary structure, heterodimer of an alpha and a beta subunit, which further assembles into trimers and the trimers into hexamers. The basic functional unit of phycobiliproteins is a ring-shaped hexamer formed from two back-to-back trimers contacting via the alpha chain subunits. The trimers are composed of alpha/beta subunit heterodimers arranged around a three-fold axis of symmetry. The phycoerythrins also contain a gamma subunit which is located in the center of the hexamer. Post-translationally, contains two covalently linked phycocyanobilin chromophores.

It is found in the plastid. The protein localises to the cyanelle thylakoid membrane. Functionally, light-harvesting photosynthetic bile pigment-protein from the phycobiliprotein complex (phycobilisome, PBS). Phycocyanin is the major phycobiliprotein in the PBS rod. This Cyanophora paradoxa protein is C-phycocyanin beta chain (cpcB).